We begin with the raw amino-acid sequence, 410 residues long: Protein TIC 214 (410 aa).

Transmembrane regions (helical) follow at residues 22 to 42 (FVFG…GSFI), 61 to 81 (GSAI…IGVI), 87 to 107 (LEPS…IGFL), 131 to 151 (AVIV…ITSI), 161 to 181 (LFLF…GFLI), and 210 to 230 (LALC…YIGL).

The protein belongs to the TIC214 family. As to quaternary structure, part of the Tic complex.

It localises to the plastid. The protein resides in the chloroplast inner membrane. Involved in protein precursor import into chloroplasts. May be part of an intermediate translocation complex acting as a protein-conducting channel at the inner envelope. This chain is Protein TIC 214, found in Mesostigma viride (Green alga).